The chain runs to 178 residues: Caveolin-1 (178 aa).

The residue at position 2 (Ser2) is an N-acetylserine. Ser2 carries the post-translational modification Phosphoserine. A required for homooligomerization region spans residues 2-94 (SGGKYVDAEG…WKASFTTFTV (93 aa)). Residues 2 to 104 (SGGKYVDAEG…TKYWFYRLLS (103 aa)) lie on the Cytoplasmic side of the membrane. Lys5 bears the N6-acetyllysine; alternate mark. Residue Lys5 forms a Glycyl lysine isopeptide (Lys-Gly) (interchain with G-Cter in ubiquitin); alternate linkage. At Tyr6 the chain carries Phosphotyrosine. Tyr14 is modified (phosphotyrosine; by ABL1). Tyr25 is modified (phosphotyrosine). Glycyl lysine isopeptide (Lys-Gly) (interchain with G-Cter in ubiquitin) cross-links involve residues Lys26, Lys30, Lys39, Lys47, and Lys57. The interval 82-94 (DGIWKASFTTFTV) is interaction with CAVIN3. The helical intramembrane region spans 105–125 (ALLGIPLALLWGIYFAILSFL). Residues 126–178 (HIWAVVPCIRSYLIEIQCISRVYSICIHTFCDPLFEAIGKVFSNIRATVQKEI) lie on the Cytoplasmic side of the membrane. Positions 131-142 (VPCIRSYLIEIQ) are interacts with SPRY1, SPRY2, SPRY3 and SPRY4. 3 S-palmitoyl cysteine lipidation sites follow: Cys133, Cys143, and Cys156. The interval 149 to 160 (SICIHTFCDPLF) is interacts with SPRY1, SPRY2, and SPRY4. An interacts with SPRY1, SPRY2, SPRY3 and SPRY4 region spans residues 167-178 (FSNIRATVQKEI).

This sequence belongs to the caveolin family. In terms of assembly, homooligomer. Interacts with GLIPR2. Interacts with NOSTRIN. Interacts with SNAP25 and STX1A. Interacts (via the N-terminus) with DPP4; the interaction is direct. Interacts with CTNNB1, CDH1 and JUP. Interacts with PACSIN2; this interaction induces membrane tubulation. Interacts with SLC7A9. Interacts with BMX and BTK. Interacts with TGFBR1. Interacts with CAVIN3 (via leucine-zipper domain) in a cholesterol-sensitive manner. Interacts with CAVIN1. Interacts with EHD2 in a cholesterol-dependent manner. Forms a ternary complex with UBXN6 and VCP; mediates CAV1 targeting to lysosomes for degradation. Interacts with ABCG1; this interaction regulates ABCG1-mediated cholesterol efflux. Interacts with NEU3; this interaction enhances NEU3 sialidase activity within caveola. Interacts (via C-terminus) with SPRY1, SPRY2 (via C-terminus), SPRY3, and SPRY4. Interacts with IGFBP5; this interaction allows trafficking of IGFBP5 from the plasma membrane to the nucleus. In terms of processing, phosphorylated at Tyr-14 by ABL1 in response to oxidative stress. Ubiquitinated. Undergo monoubiquitination and multi- and/or polyubiquitination. Monoubiquitination of N-terminal lysines promotes integration in a ternary complex with UBXN6 and VCP which promotes oligomeric CAV1 targeting to lysosomes for degradation. Ubiquitinated by ZNRF1; leading to degradation and modulation of the TLR4-mediated immune response.

Its subcellular location is the golgi apparatus membrane. The protein localises to the cell membrane. It localises to the membrane. The protein resides in the caveola. It is found in the membrane raft. Its function is as follows. May act as a scaffolding protein within caveolar membranes. Forms a stable heterooligomeric complex with CAV2 that targets to lipid rafts and drives caveolae formation. Mediates the recruitment of CAVIN proteins (CAVIN1/2/3/4) to the caveolae. Interacts directly with G-protein alpha subunits and can functionally regulate their activity. Involved in the costimulatory signal essential for T-cell receptor (TCR)-mediated T-cell activation. Its binding to DPP4 induces T-cell proliferation and NF-kappa-B activation in a T-cell receptor/CD3-dependent manner. Recruits CTNNB1 to caveolar membranes and may regulate CTNNB1-mediated signaling through the Wnt pathway. Negatively regulates TGFB1-mediated activation of SMAD2/3 by mediating the internalization of TGFBR1 from membrane rafts leading to its subsequent degradation. Binds 20(S)-hydroxycholesterol (20(S)-OHC). The chain is Caveolin-1 (CAV1) from Ornithorhynchus anatinus (Duckbill platypus).